Reading from the N-terminus, the 198-residue chain is Heat shock 70 kDa protein (198 aa).

Over residues 170–191 the composition is skewed to gly residues; sequence GGGVPSGMPGGMPGAGGGGGKG. Positions 170–198 are disordered; that stretch reads GGGVPSGMPGGMPGAGGGGGKGPTIEEVD.

Belongs to the heat shock protein 70 family.

The polypeptide is Heat shock 70 kDa protein (Schistosoma japonicum (Blood fluke)).